Consider the following 555-residue polypeptide: Glutamine--tRNA ligase (555 aa).

Residues 34-44 (PEPNGYLHIGH) carry the 'HIGH' region motif. ATP is bound by residues 35–37 (EPN) and 41–47 (HIGHAKS). 2 residues coordinate L-glutamine: D67 and Y212. Residues T231, 261 to 262 (RL), and 269 to 271 (MSK) contribute to the ATP site. Positions 268–272 (VMSKR) match the 'KMSKS' region motif.

This sequence belongs to the class-I aminoacyl-tRNA synthetase family. In terms of assembly, monomer.

The protein resides in the cytoplasm. The enzyme catalyses tRNA(Gln) + L-glutamine + ATP = L-glutaminyl-tRNA(Gln) + AMP + diphosphate. This Cronobacter sakazakii (strain ATCC BAA-894) (Enterobacter sakazakii) protein is Glutamine--tRNA ligase.